The following is a 201-amino-acid chain: MIASVRGEVLEIALDHVVVEAAGVGYRLNATPSTLATLTRGAEARLYTAMIVREDSMTLYGFADTEARDLFGLLQTVSGVGPRLAMAVLAVLEPEALRKALAESNVAALTRVPGIGKRGAERMVVELRDKVNLVPVQAGPPGSTPAVAATPVREQVVEALTGLGFPLKQAEQALDTVLAEQPAADTSTALRAALSLLGKNR.

Residues methionine 1 to alanine 63 are domain I. The tract at residues aspartate 64–glycine 142 is domain II. The interval serine 143 to arginine 153 is flexible linker. Residues arginine 153–arginine 201 form a domain III region.

This sequence belongs to the RuvA family. In terms of assembly, homotetramer. Forms an RuvA(8)-RuvB(12)-Holliday junction (HJ) complex. HJ DNA is sandwiched between 2 RuvA tetramers; dsDNA enters through RuvA and exits via RuvB. An RuvB hexamer assembles on each DNA strand where it exits the tetramer. Each RuvB hexamer is contacted by two RuvA subunits (via domain III) on 2 adjacent RuvB subunits; this complex drives branch migration. In the full resolvosome a probable DNA-RuvA(4)-RuvB(12)-RuvC(2) complex forms which resolves the HJ.

It is found in the cytoplasm. Functionally, the RuvA-RuvB-RuvC complex processes Holliday junction (HJ) DNA during genetic recombination and DNA repair, while the RuvA-RuvB complex plays an important role in the rescue of blocked DNA replication forks via replication fork reversal (RFR). RuvA specifically binds to HJ cruciform DNA, conferring on it an open structure. The RuvB hexamer acts as an ATP-dependent pump, pulling dsDNA into and through the RuvAB complex. HJ branch migration allows RuvC to scan DNA until it finds its consensus sequence, where it cleaves and resolves the cruciform DNA. The polypeptide is Holliday junction branch migration complex subunit RuvA (Nocardia farcinica (strain IFM 10152)).